A 154-amino-acid chain; its full sequence is Large ribosomal subunit protein uL23 (154 aa).

The protein belongs to the universal ribosomal protein uL23 family.

Functionally, this protein binds to a specific region on the 26S rRNA. In Daucus carota (Wild carrot), this protein is Large ribosomal subunit protein uL23 (RPL23A).